Here is a 204-residue protein sequence, read N- to C-terminus: Thymidine kinase (204 aa).

ATP-binding positions include 18–25 and 91–94; these read GSMFSGKT and DEGQ. Catalysis depends on E92, which acts as the Proton acceptor. 4 residues coordinate Zn(2+): C148, C151, C180, and H183.

Belongs to the thymidine kinase family. In terms of assembly, homotetramer.

The protein resides in the cytoplasm. It carries out the reaction thymidine + ATP = dTMP + ADP + H(+). The sequence is that of Thymidine kinase from Bdellovibrio bacteriovorus (strain ATCC 15356 / DSM 50701 / NCIMB 9529 / HD100).